The sequence spans 183 residues: GTP cyclohydrolase 1 (183 aa).

Cys71, His74, and Cys142 together coordinate Zn(2+).

This sequence belongs to the GTP cyclohydrolase I family. Toroid-shaped homodecamer, composed of two pentamers of five dimers.

It catalyses the reaction GTP + H2O = 7,8-dihydroneopterin 3'-triphosphate + formate + H(+). Its pathway is cofactor biosynthesis; 7,8-dihydroneopterin triphosphate biosynthesis; 7,8-dihydroneopterin triphosphate from GTP: step 1/1. This Leptospira interrogans serogroup Icterohaemorrhagiae serovar copenhageni (strain Fiocruz L1-130) protein is GTP cyclohydrolase 1.